A 75-amino-acid chain; its full sequence is Small ribosomal subunit protein bS18 (75 aa).

Basic residues predominate over residues 1-11 (MAAKPFFRRRK). The interval 1-21 (MAAKPFFRRRKTDPFEGENAP) is disordered.

This sequence belongs to the bacterial ribosomal protein bS18 family. Part of the 30S ribosomal subunit. Forms a tight heterodimer with protein bS6.

In terms of biological role, binds as a heterodimer with protein bS6 to the central domain of the 16S rRNA, where it helps stabilize the platform of the 30S subunit. This chain is Small ribosomal subunit protein bS18, found in Jannaschia sp. (strain CCS1).